Here is a 128-residue protein sequence, read N- to C-terminus: MPKSVIIPAGTSTPIAPFVPGTLADGVVYVSGTLPFDEFNNVVYPDDPKAQTRHVLETIRRVIETAGGTMEDVTFNSIFITDWKNYAAINEIYAEFFPGDKPARFCIQCGLVKPEALVEIASVAHIAK.

It belongs to the RutC family.

It catalyses the reaction (Z)-3-aminoacrylate + H2O + H(+) = 3-oxopropanoate + NH4(+). Its function is as follows. Involved in pyrimidine catabolism. Catalyzes the deamination of 3-aminoacrylate to malonic semialdehyde, a reaction that can also occur spontaneously. RutC may facilitate the reaction and modulate the metabolic fitness, rather than catalyzing essential functions. The polypeptide is 3-aminoacrylate deaminase RutC (Enterobacter sp. (strain 638)).